Reading from the N-terminus, the 955-residue chain is Isoleucine--tRNA ligase (955 aa).

A 'HIGH' region motif is present at residues 60 to 70; it reads PYANGDLHIGH. Glutamate 563 contributes to the L-isoleucyl-5'-AMP binding site. The 'KMSKS' region motif lies at 604–608; that stretch reads KMSKS. Lysine 607 serves as a coordination point for ATP. Residues cysteine 926, cysteine 929, cysteine 946, and cysteine 949 each coordinate Zn(2+).

Belongs to the class-I aminoacyl-tRNA synthetase family. IleS type 1 subfamily. As to quaternary structure, monomer. Requires Zn(2+) as cofactor.

It localises to the cytoplasm. The catalysed reaction is tRNA(Ile) + L-isoleucine + ATP = L-isoleucyl-tRNA(Ile) + AMP + diphosphate. Catalyzes the attachment of isoleucine to tRNA(Ile). As IleRS can inadvertently accommodate and process structurally similar amino acids such as valine, to avoid such errors it has two additional distinct tRNA(Ile)-dependent editing activities. One activity is designated as 'pretransfer' editing and involves the hydrolysis of activated Val-AMP. The other activity is designated 'posttransfer' editing and involves deacylation of mischarged Val-tRNA(Ile). This chain is Isoleucine--tRNA ligase, found in Cyanothece sp. (strain PCC 7425 / ATCC 29141).